We begin with the raw amino-acid sequence, 180 residues long: Ribulose bisphosphate carboxylase small subunit, chloroplastic 4 (180 aa).

The transit peptide at 1 to 56 (MASSIVSSAAVATRGNGAQASMVAPFTGLKSTASFPVSRKQNLDITSIASNGGRVS) directs the protein to the chloroplast.

This sequence belongs to the RuBisCO small chain family. As to quaternary structure, heterohexadecamer of 8 large and 8 small subunits. In terms of assembly, (Microbial infection) Binds to tobamovirus movement protein; this interaction seems required for viral systemic movement.

The protein localises to the plastid. Its subcellular location is the chloroplast. It localises to the cell junction. The protein resides in the plasmodesma. In terms of biological role, ruBisCO catalyzes two reactions: the carboxylation of D-ribulose 1,5-bisphosphate, the primary event in carbon dioxide fixation, as well as the oxidative fragmentation of the pentose substrate. Both reactions occur simultaneously and in competition at the same active site. Although the small subunit is not catalytic it is essential for maximal activity. Involved in antiviral defenses. This chain is Ribulose bisphosphate carboxylase small subunit, chloroplastic 4, found in Solanum lycopersicum (Tomato).